A 222-amino-acid polypeptide reads, in one-letter code: Cytidylate kinase (222 aa).

10–18 (GPAGSGKSS) contributes to the ATP binding site.

The protein belongs to the cytidylate kinase family. Type 1 subfamily.

The protein localises to the cytoplasm. The catalysed reaction is CMP + ATP = CDP + ADP. It carries out the reaction dCMP + ATP = dCDP + ADP. This is Cytidylate kinase from Acholeplasma laidlawii (strain PG-8A).